Reading from the N-terminus, the 189-residue chain is Phosphoheptose isomerase (189 aa).

The region spanning 34–189 is the SIS domain; that stretch reads LADSLAGGRK…CDLVEKRLFP (156 aa). A substrate-binding site is contributed by 49 to 51; it reads NGG. Residues His58 and Glu62 each contribute to the Zn(2+) site. Substrate-binding positions include Glu62, 91–92, 117–119, Ser122, and Gln169; these read ND and STS. Zn(2+) contacts are provided by Gln169 and His177.

Belongs to the SIS family. GmhA subfamily. As to quaternary structure, homotetramer. Requires Zn(2+) as cofactor.

The protein localises to the cytoplasm. It catalyses the reaction 2 D-sedoheptulose 7-phosphate = D-glycero-alpha-D-manno-heptose 7-phosphate + D-glycero-beta-D-manno-heptose 7-phosphate. The protein operates within carbohydrate biosynthesis; D-glycero-D-manno-heptose 7-phosphate biosynthesis; D-glycero-alpha-D-manno-heptose 7-phosphate and D-glycero-beta-D-manno-heptose 7-phosphate from sedoheptulose 7-phosphate: step 1/1. In terms of biological role, catalyzes the isomerization of sedoheptulose 7-phosphate in D-glycero-D-manno-heptose 7-phosphate. This chain is Phosphoheptose isomerase, found in Geobacter sulfurreducens (strain ATCC 51573 / DSM 12127 / PCA).